A 37-amino-acid polypeptide reads, in one-letter code: Large ribosomal subunit protein bL36 (37 aa).

The protein belongs to the bacterial ribosomal protein bL36 family.

The chain is Large ribosomal subunit protein bL36 from Mycobacterium leprae (strain Br4923).